A 484-amino-acid chain; its full sequence is HSPB1-associated protein 1 (484 aa).

Positions 1 to 26 are disordered; it reads MAARPGAITNADSASGGGEEEGKHVK. The interaction with HSPB1 stretch occupies residues 88–208; that stretch reads ETACNYVEAT…EDTPFLYPTR (121 aa). The region spanning 124–288 is the JmjC domain; sequence WAYADYKYFV…HQTRVEEAIT (165 aa). The tract at residues 396–429 is disordered; that stretch reads TPSSEEPSSERGGIFENDGEDFVSKNGKSFGKRQ.

Interacts with CRYAB and HSPB1.

The protein localises to the cytoplasm. In terms of biological role, may play a role in cellular stress response. The polypeptide is HSPB1-associated protein 1 (HSPBAP1) (Bos taurus (Bovine)).